The primary structure comprises 255 residues: 1-acyl-sn-glycerol-3-phosphate acyltransferase (255 aa).

The short motif at 78–83 is the HXXXXD motif element; the sequence is HVSWLD.

It belongs to the 1-acyl-sn-glycerol-3-phosphate acyltransferase family.

The protein resides in the cell inner membrane. It catalyses the reaction a 1-acyl-sn-glycero-3-phosphate + an acyl-CoA = a 1,2-diacyl-sn-glycero-3-phosphate + CoA. Its pathway is phospholipid metabolism; CDP-diacylglycerol biosynthesis; CDP-diacylglycerol from sn-glycerol 3-phosphate: step 2/3. Functionally, converts lysophosphatidic acid (LPA) into phosphatidic acid by incorporating acyl moiety at the 2 position. In Neisseria gonorrhoeae, this protein is 1-acyl-sn-glycerol-3-phosphate acyltransferase (plsC).